Here is a 129-residue protein sequence, read N- to C-terminus: Small ribosomal subunit protein uS12 (129 aa).

Positions 1–25 (MPTYNQLVRFGRKSKTRKTKSPALE) are disordered. The segment covering 10 to 20 (FGRKSKTRKTK) has biased composition (basic residues). The residue at position 89 (Asp-89) is a 3-methylthioaspartic acid. The interval 110–129 (RKQGRSRYGAPSKQVAVTKK) is disordered.

It belongs to the universal ribosomal protein uS12 family. In terms of assembly, part of the 30S ribosomal subunit. Contacts proteins S8 and S17. May interact with IF1 in the 30S initiation complex.

Its function is as follows. With S4 and S5 plays an important role in translational accuracy. Interacts with and stabilizes bases of the 16S rRNA that are involved in tRNA selection in the A site and with the mRNA backbone. Located at the interface of the 30S and 50S subunits, it traverses the body of the 30S subunit contacting proteins on the other side and probably holding the rRNA structure together. The combined cluster of proteins S8, S12 and S17 appears to hold together the shoulder and platform of the 30S subunit. In Rickettsia canadensis (strain McKiel), this protein is Small ribosomal subunit protein uS12.